We begin with the raw amino-acid sequence, 131 residues long: MEETNRQKKIGGLLQKDLADILQNSLRESGRTGILISVSKVRVTTDLSIAKAYVSIFPSKHQEEVIKEINENKSQIKHEMAQRTRHQLRKMPDLSFYVDDSLEYIDGIEKSIKGKEDPVANPDLLDKRKKS.

The protein belongs to the RbfA family. Monomer. Binds 30S ribosomal subunits, but not 50S ribosomal subunits or 70S ribosomes.

It localises to the cytoplasm. One of several proteins that assist in the late maturation steps of the functional core of the 30S ribosomal subunit. Associates with free 30S ribosomal subunits (but not with 30S subunits that are part of 70S ribosomes or polysomes). Required for efficient processing of 16S rRNA. May interact with the 5'-terminal helix region of 16S rRNA. The protein is Ribosome-binding factor A of Christiangramia forsetii (strain DSM 17595 / CGMCC 1.15422 / KT0803) (Gramella forsetii).